A 297-amino-acid chain; its full sequence is ABSCISIC ACID-INSENSITIVE 5-like protein 2 (297 aa).

Residues Ser-21, Ser-43, and Ser-81 each carry the phosphoserine modification. Disordered regions lie at residues 100 to 119 (IQQN…QPTL) and 138 to 157 (IPGS…SGAG). Thr-118 carries the phosphothreonine modification. Residues 146 to 157 (PVGGGSAGSGAG) are compositionally biased toward gly residues. The bZIP domain maps to 225–288 (VERRQKRMIK…SVPPPDPKRQ (64 aa)). Positions 227 to 246 (RRQKRMIKNRESAARSRARK) are basic motif. A leucine-zipper region spans residues 253–267 (LEIKVSRLEEENERL). Residues 272–297 (EVEKILPSVPPPDPKRQLRRTSSAPF) are disordered.

This sequence belongs to the bZIP family. ABI5 subfamily. As to quaternary structure, DNA-binding heterodimer with ABI5/DPBF1, DPBF2 or EEL/DPBF4. Interacts with the AFP proteins AFP1, AFP2, AFP3 and AFP4. In terms of tissue distribution, predominantly expressed in seeds.

It localises to the nucleus. In terms of biological role, binds to the embryo specification element and the ABA-responsive element (ABRE) of the Dc3 gene promoter. Could participate in abscisic acid-regulated gene expression during seed development. This is ABSCISIC ACID-INSENSITIVE 5-like protein 2 (DPBF3) from Arabidopsis thaliana (Mouse-ear cress).